The primary structure comprises 338 residues: Holliday junction branch migration complex subunit RuvB (338 aa).

The tract at residues 1-22 is disordered; the sequence is MIEADRLIHAEPQGPEERDEQI. Residues 4–187 are large ATPase domain (RuvB-L); that stretch reads ADRLIHAEPQ…FGIPLRLEFY (184 aa). ATP-binding positions include arginine 27, glycine 68, lysine 71, threonine 72, threonine 73, 134-136, arginine 177, tyrosine 187, and arginine 224; that span reads EDY. Threonine 72 is a Mg(2+) binding site. Residues 188 to 258 form a small ATPAse domain (RuvB-S) region; sequence NTKDLSSIVS…VADLALDMLD (71 aa). Residues 261–338 form a head domain (RuvB-H) region; the sequence is SEGFDYMDRK…RHFDIIQPEK (78 aa). The DNA site is built by arginine 297, arginine 316, and arginine 321.

Belongs to the RuvB family. Homohexamer. Forms an RuvA(8)-RuvB(12)-Holliday junction (HJ) complex. HJ DNA is sandwiched between 2 RuvA tetramers; dsDNA enters through RuvA and exits via RuvB. An RuvB hexamer assembles on each DNA strand where it exits the tetramer. Each RuvB hexamer is contacted by two RuvA subunits (via domain III) on 2 adjacent RuvB subunits; this complex drives branch migration. In the full resolvosome a probable DNA-RuvA(4)-RuvB(12)-RuvC(2) complex forms which resolves the HJ.

It localises to the cytoplasm. It carries out the reaction ATP + H2O = ADP + phosphate + H(+). Its function is as follows. The RuvA-RuvB-RuvC complex processes Holliday junction (HJ) DNA during genetic recombination and DNA repair, while the RuvA-RuvB complex plays an important role in the rescue of blocked DNA replication forks via replication fork reversal (RFR). RuvA specifically binds to HJ cruciform DNA, conferring on it an open structure. The RuvB hexamer acts as an ATP-dependent pump, pulling dsDNA into and through the RuvAB complex. RuvB forms 2 homohexamers on either side of HJ DNA bound by 1 or 2 RuvA tetramers; 4 subunits per hexamer contact DNA at a time. Coordinated motions by a converter formed by DNA-disengaged RuvB subunits stimulates ATP hydrolysis and nucleotide exchange. Immobilization of the converter enables RuvB to convert the ATP-contained energy into a lever motion, pulling 2 nucleotides of DNA out of the RuvA tetramer per ATP hydrolyzed, thus driving DNA branch migration. The RuvB motors rotate together with the DNA substrate, which together with the progressing nucleotide cycle form the mechanistic basis for DNA recombination by continuous HJ branch migration. Branch migration allows RuvC to scan DNA until it finds its consensus sequence, where it cleaves and resolves cruciform DNA. The polypeptide is Holliday junction branch migration complex subunit RuvB (Shewanella sediminis (strain HAW-EB3)).